The following is a 610-amino-acid chain: Threonine--tRNA ligase (610 aa).

Residues 1 to 29 (MANHDQQTVSSAAATTSASPSPVVLPKTS) are disordered. Low complexity predominate over residues 8–24 (TVSSAAATTSASPSPVV). Positions 209–502 (DHRRIGKDLD…MTENYAGDYP (294 aa)) are catalytic. Zn(2+) contacts are provided by Cys-302, His-353, and His-479.

This sequence belongs to the class-II aminoacyl-tRNA synthetase family. As to quaternary structure, homodimer. Zn(2+) serves as cofactor.

The protein localises to the cytoplasm. The enzyme catalyses tRNA(Thr) + L-threonine + ATP = L-threonyl-tRNA(Thr) + AMP + diphosphate + H(+). In terms of biological role, catalyzes the attachment of threonine to tRNA(Thr) in a two-step reaction: L-threonine is first activated by ATP to form Thr-AMP and then transferred to the acceptor end of tRNA(Thr). Also edits incorrectly charged L-seryl-tRNA(Thr). The polypeptide is Threonine--tRNA ligase (Synechococcus sp. (strain WH7803)).